Consider the following 516-residue polypeptide: Alpha-(1-&gt;6)-mannopyranosyltransferase A (516 aa).

Threonine 2 carries the N-acetylthreonine modification. The next 13 helical transmembrane spans lie at 38 to 58 (ARLG…AGSV), 78 to 98 (GLVL…LAWL), 112 to 132 (FTMR…VPVF), 174 to 194 (ITTA…TVIV), 198 to 218 (VVAG…LLVW), 232 to 252 (PTAL…MGGV), 278 to 298 (IILI…LPFL), 326 to 346 (LLIF…GLGW), 350 to 370 (LAGS…ANVI), 385 to 405 (LLRI…PLLW), 414 to 434 (AALT…PAAL), 454 to 474 (AIAA…PDGS), and 477 to 497 (MYSW…WYVL).

It belongs to the MptA/B family.

It is found in the membrane. In terms of biological role, involved in the latter stages of the biosynthesis of the alpha-(1-&gt;6) mannan core of lipomannan (LM). Catalyzes the addition of alpha-(1-&gt;6)-mannose residue. The chain is Alpha-(1-&gt;6)-mannopyranosyltransferase A (mptA) from Mycobacterium tuberculosis (strain ATCC 25618 / H37Rv).